Reading from the N-terminus, the 597-residue chain is Siderophore iron transporter 2 (597 aa).

Ser-46 bears the Phosphoserine mark. 14 helical membrane passes run 65–85, 97–117, 131–151, 159–179, 190–210, 225–245, 281–301, 312–332, 357–377, 390–410, 419–439, 448–468, 485–505, and 558–578; these read IIVAYLGLYLLSFASSLEQQT, FSAHSNLATINLVGNILLAVV, SESLSLALGMTVLGYLSLAFS, VAYILYICGQTGLGLLSQLII, ILSAIPELPYLATVWIGPVLA, YGIWAFILPTVSLPLLASLFL, LDGLGIVLFVSGFTLLLLPFS, TILTLFTITLSIALLVTLCFY, VLIFTYFMSYYIFSNFLTSFL, LTLNVFVFSMTTTAILSGFLM, LLMISVPMYVLGILGIILFGI, LVLVLILAGMGGGLLTLSAQI, LYLTFSSVGGAFGSAIAGGVW, and KDLFHISLVASLFMFAGLVII.

The protein belongs to the major facilitator superfamily.

The protein localises to the membrane. Functionally, involved in the transport of siderophore iron and so has a role in iron homeostasis. This Schizosaccharomyces pombe (strain 972 / ATCC 24843) (Fission yeast) protein is Siderophore iron transporter 2 (str2).